A 320-amino-acid polypeptide reads, in one-letter code: GDSL esterase/lipase At3g43570 (320 aa).

Positions 1–19 (MKIQIIWLTLVLIVVEANA) are cleaved as a signal peptide. N-linked (GlcNAc...) asparagine glycosylation is present at asparagine 25. The active-site Nucleophile is serine 37. Asparagine 287 carries an N-linked (GlcNAc...) asparagine glycan. Catalysis depends on residues aspartate 295 and histidine 298.

The protein belongs to the 'GDSL' lipolytic enzyme family.

It is found in the secreted. The protein is GDSL esterase/lipase At3g43570 of Arabidopsis thaliana (Mouse-ear cress).